The following is a 265-amino-acid chain: MSHASDPKKAGAHGDKSLVVEHLRKEYVRGKAVLKDISFTVSGQSTTAIIGPSGTGKSTLLRCINRLIEPTAGRILVSGEDVCALKGTALREARRRIGMVFQEYNLVERLSVMENVLCGRLGYISPWRAWLRKFPQEDIDRAFDLLDMVGLADFARARADELSGGQRQRVGIARAVMQEPHILLADEPTSSLDPKTSVEIMELLRAVAEKRDIPVLVNIHDVTLGRRFSDRVIGMCKGEVLFDDVPSALQDDHLKQIYGGEEWLQ.

The 245-residue stretch at 18-262 folds into the ABC transporter domain; the sequence is LVVEHLRKEY…HLKQIYGGEE (245 aa). 51-58 lines the ATP pocket; the sequence is GPSGTGKS.

Belongs to the ABC transporter superfamily. Phosphonates importer (TC 3.A.1.9.1) family. In terms of assembly, the complex is composed of two ATP-binding proteins (PhnC), two transmembrane proteins (PhnE) and a solute-binding protein (PhnD).

The protein localises to the cell inner membrane. The enzyme catalyses phosphonate(out) + ATP + H2O = phosphonate(in) + ADP + phosphate + H(+). In terms of biological role, part of the ABC transporter complex PhnCDE involved in phosphonates import. Responsible for energy coupling to the transport system. The chain is Phosphonates import ATP-binding protein PhnC from Nitratidesulfovibrio vulgaris (strain ATCC 29579 / DSM 644 / CCUG 34227 / NCIMB 8303 / VKM B-1760 / Hildenborough) (Desulfovibrio vulgaris).